Reading from the N-terminus, the 185-residue chain is Ribosome-recycling factor (185 aa).

The protein belongs to the RRF family.

Its subcellular location is the cytoplasm. Responsible for the release of ribosomes from messenger RNA at the termination of protein biosynthesis. May increase the efficiency of translation by recycling ribosomes from one round of translation to another. The sequence is that of Ribosome-recycling factor from Carboxydothermus hydrogenoformans (strain ATCC BAA-161 / DSM 6008 / Z-2901).